The following is a 443-amino-acid chain: Mitochondrial enolase superfamily member 1 (443 aa).

Residues glycine 24–aspartate 26 and tyrosine 34 each bind substrate. The residue at position 148 (serine 148) is a Phosphoserine. Lysine 220 contacts substrate. The Proton donor/acceptor role is filled by lysine 222. Aspartate 250 is a Mg(2+) binding site. Substrate-binding positions include asparagine 252, glutamate 276, glutamate 305, histidine 355–glycine 357, and glutamate 386. Mg(2+) contacts are provided by glutamate 276 and glutamate 305. Residue histidine 355 is part of the active site.

Belongs to the mandelate racemase/muconate lactonizing enzyme family. ENOSF1 subfamily. The cofactor is Mg(2+). In terms of processing, could be sumoylated.

It localises to the mitochondrion. It carries out the reaction L-fuconate = 2-dehydro-3-deoxy-L-fuconate + H2O. In terms of biological role, plays a role in the catabolism of L-fucose, a sugar that is part of the carbohydrates that are attached to cellular glycoproteins. Catalyzes the dehydration of L-fuconate to 2-keto-3-deoxy-L-fuconate by the abstraction of the 2-proton to generate an enediolate intermediate that is stabilized by the magnesium ion. May down-regulate thymidylate synthase activity, possibly already at the RNA level, by promoting the degradation of TYMS mRNA via an antisense RNA-based mechanism. The sequence is that of Mitochondrial enolase superfamily member 1 (ENOSF1) from Pongo abelii (Sumatran orangutan).